Reading from the N-terminus, the 406-residue chain is Tryptophan synthase beta chain (406 aa).

Lysine 99 is modified (N6-(pyridoxal phosphate)lysine).

The protein belongs to the TrpB family. Tetramer of two alpha and two beta chains. The cofactor is pyridoxal 5'-phosphate.

It carries out the reaction (1S,2R)-1-C-(indol-3-yl)glycerol 3-phosphate + L-serine = D-glyceraldehyde 3-phosphate + L-tryptophan + H2O. It participates in amino-acid biosynthesis; L-tryptophan biosynthesis; L-tryptophan from chorismate: step 5/5. The beta subunit is responsible for the synthesis of L-tryptophan from indole and L-serine. The protein is Tryptophan synthase beta chain of Phenylobacterium zucineum (strain HLK1).